The following is a 64-amino-acid chain: Large ribosomal subunit protein uL29 (64 aa).

Belongs to the universal ribosomal protein uL29 family.

The sequence is that of Large ribosomal subunit protein uL29 from Pseudomonas entomophila (strain L48).